Here is a 202-residue protein sequence, read N- to C-terminus: Prostamide/prostaglandin F synthase (202 aa).

Tyr108 is modified (phosphotyrosine).

It belongs to the peroxiredoxin-like PRXL2 family. Prostamide/prostaglandin F synthase subfamily.

Its subcellular location is the cytoplasm. It is found in the cytosol. The catalysed reaction is prostaglandin H2 + [thioredoxin]-dithiol = prostaglandin F2alpha + [thioredoxin]-disulfide. It carries out the reaction prostamide F2alpha + [thioredoxin]-disulfide = prostamide H2 + [thioredoxin]-dithiol. Catalyzes the reduction of prostaglandin-ethanolamide H(2) (prostamide H(2)) to prostamide F(2alpha) with NADPH as proton donor. Also able to reduce prostaglandin H(2) to prostaglandin F(2alpha). The chain is Prostamide/prostaglandin F synthase (PRXL2B) from Sus scrofa (Pig).